Reading from the N-terminus, the 359-residue chain is Mandelate racemase (359 aa).

The Proton acceptor; specific for S-mandelate role is filled by K166. D195, E221, and E247 together coordinate Mg(2+). H297 functions as the Proton acceptor; specific for R-mandelate in the catalytic mechanism. E317 serves as a coordination point for substrate.

This sequence belongs to the mandelate racemase/muconate lactonizing enzyme family. In terms of assembly, homooctamer. It depends on Mg(2+) as a cofactor.

It catalyses the reaction (S)-mandelate = (R)-mandelate. It participates in aromatic compound metabolism; (R)-mandelate degradation; benzoate from (R)-mandelate: step 1/4. The protein is Mandelate racemase (mdlA) of Pseudomonas putida (Arthrobacter siderocapsulatus).